A 281-amino-acid chain; its full sequence is Predicted GPI-anchored protein 39 (281 aa).

Positions 1–18 are cleaved as a signal peptide; that stretch reads MKATTFTLLLSIATAINA. 2 disordered regions span residues 52–94 and 106–227; these read HHHG…SASV and VSVS…SSSE. Composition is skewed to low complexity over residues 69–94, 106–158, 167–203, and 210–227; these read SSSSVSESTVEELSTTTTTESVSASV, VSVS…STTD, ATDSVETTFESVSNTEDLSSSSSSIITDSSESTIEET, and SVPSSLSEEYSTSGSSSE. N-linked (GlcNAc...) asparagine glycosylation occurs at N150. 4 N-linked (GlcNAc...) asparagine glycosylation sites follow: N239, N246, N249, and N252. S256 carries the GPI-anchor amidated serine lipid modification. The propeptide at 257-281 is removed in mature form; it reads ANFAIQYGTDYGVAVVAAIVGALLI.

It is found in the cell membrane. In Candida albicans (strain SC5314 / ATCC MYA-2876) (Yeast), this protein is Predicted GPI-anchored protein 39 (PGA39).